We begin with the raw amino-acid sequence, 601 residues long: MAQASQCIRNFSIIAHIDHGKSTLADRLIEYTGALSKREMEAQVLDNMDLERERGITIKLQTVRLQYPAKDGQTYELNLIDTPGHVDFTYEVSRSLAACEGALLIVDAAQGIEAQTLANVYLALENNLEIIPVINKIDLPSAEPERVKQEIEDVIGLDASEAILASAKTGIGIEDILEAVVAKVPPPQGDDNTPLKALIFDSYFDAYKGAISYVRVMEGRVAKGTQIKMMSSGKVFDVTEVGMFTPALRIVDEIKAGQVGYIAASIKNVRDTQVGDTITDAENAALYPLPGYRKATPMVFCGLYPVDSSDYGRLKDALEKLHLNDSSLVFEPETSSALGFGYRCGFLGLLHMDVIQERLEREYDLNLITTAPSVVYKVNKTDGEVLSIDNPSNLPKVDEIETIEEPIVKANIMVPSDFVGAIMELNQEKRGNFLNMDYLSANRVTLHYELPLSEIVYDYFDQLKSRTKGYASLDYELAGYKAASLVKLDVLLNGELVDALSFIVHKEKSYARGRRLVEKLRGIIPRQMFEVPIQAVIGQKVVARETVKAMRKDVLAKCYGGDISRKRKLLEKQKEGKKRMKQVGSVEIPQDAFMAVLKIDD.

Residues 6–188 form the tr-type G domain; that stretch reads QCIRNFSIIA…AVVAKVPPPQ (183 aa). GTP contacts are provided by residues 18 to 23 and 135 to 138; these read DHGKST and NKID.

Belongs to the TRAFAC class translation factor GTPase superfamily. Classic translation factor GTPase family. LepA subfamily.

Its subcellular location is the cell membrane. The enzyme catalyses GTP + H2O = GDP + phosphate + H(+). Its function is as follows. Required for accurate and efficient protein synthesis under certain stress conditions. May act as a fidelity factor of the translation reaction, by catalyzing a one-codon backward translocation of tRNAs on improperly translocated ribosomes. Back-translocation proceeds from a post-translocation (POST) complex to a pre-translocation (PRE) complex, thus giving elongation factor G a second chance to translocate the tRNAs correctly. Binds to ribosomes in a GTP-dependent manner. In Desulfitobacterium hafniense (strain DSM 10664 / DCB-2), this protein is Elongation factor 4.